A 189-amino-acid polypeptide reads, in one-letter code: Selenoprotein S (189 aa).

Residues 29–49 form a helical membrane-spanning segment; sequence VVLSSYGWYILLGCILIYLLI. Residues 114-125 show a composition bias toward basic and acidic residues; that stretch reads IETWDRMKEGKS. The segment at 114–189 is disordered; that stretch reads IETWDRMKEG…RRGPSSGGUG (76 aa). Residues 136 to 147 are compositionally biased toward low complexity; it reads PSPSTSTSAATK. Over residues 148 to 157 the composition is skewed to basic and acidic residues; that stretch reads PKQEKQERKT. A non-standard amino acid (selenocysteine) is located at residue Sec188.

The protein belongs to the selenoprotein S family.

The protein resides in the endoplasmic reticulum membrane. It is found in the cytoplasm. Involved in the degradation process of misfolded endoplasmic reticulum (ER) luminal proteins. Participates in the transfer of misfolded proteins from the ER to the cytosol, where they are destroyed by the proteasome in a ubiquitin-dependent manner. The protein is Selenoprotein S (vimp) of Xenopus tropicalis (Western clawed frog).